We begin with the raw amino-acid sequence, 952 residues long: Isoleucine--tRNA ligase (952 aa).

Positions 60–70 match the 'HIGH' region motif; that stretch reads PYANGSLHIGH. L-isoleucyl-5'-AMP is bound at residue E562. Residues 603–607 carry the 'KMSKS' region motif; that stretch reads KMSKS. K606 provides a ligand contact to ATP. Zn(2+)-binding residues include C921, C924, C941, and C944.

This sequence belongs to the class-I aminoacyl-tRNA synthetase family. IleS type 1 subfamily. Monomer. The cofactor is Zn(2+).

The protein resides in the cytoplasm. The catalysed reaction is tRNA(Ile) + L-isoleucine + ATP = L-isoleucyl-tRNA(Ile) + AMP + diphosphate. Catalyzes the attachment of isoleucine to tRNA(Ile). As IleRS can inadvertently accommodate and process structurally similar amino acids such as valine, to avoid such errors it has two additional distinct tRNA(Ile)-dependent editing activities. One activity is designated as 'pretransfer' editing and involves the hydrolysis of activated Val-AMP. The other activity is designated 'posttransfer' editing and involves deacylation of mischarged Val-tRNA(Ile). This Microcystis aeruginosa (strain NIES-843 / IAM M-2473) protein is Isoleucine--tRNA ligase.